We begin with the raw amino-acid sequence, 158 residues long: NAD(P)H-quinone oxidoreductase subunit J, chloroplastic (158 aa).

This sequence belongs to the complex I 30 kDa subunit family. As to quaternary structure, NDH is composed of at least 16 different subunits, 5 of which are encoded in the nucleus.

It localises to the plastid. The protein resides in the chloroplast thylakoid membrane. The catalysed reaction is a plastoquinone + NADH + (n+1) H(+)(in) = a plastoquinol + NAD(+) + n H(+)(out). It catalyses the reaction a plastoquinone + NADPH + (n+1) H(+)(in) = a plastoquinol + NADP(+) + n H(+)(out). NDH shuttles electrons from NAD(P)H:plastoquinone, via FMN and iron-sulfur (Fe-S) centers, to quinones in the photosynthetic chain and possibly in a chloroplast respiratory chain. The immediate electron acceptor for the enzyme in this species is believed to be plastoquinone. Couples the redox reaction to proton translocation, and thus conserves the redox energy in a proton gradient. The polypeptide is NAD(P)H-quinone oxidoreductase subunit J, chloroplastic (Coffea arabica (Arabian coffee)).